The following is a 66-amino-acid chain: Large ribosomal subunit protein bL35 (66 aa).

It belongs to the bacterial ribosomal protein bL35 family.

In Thermomicrobium roseum (strain ATCC 27502 / DSM 5159 / P-2), this protein is Large ribosomal subunit protein bL35.